The primary structure comprises 447 residues: N-succinylarginine dihydrolase (447 aa).

Substrate-binding positions include 19–28 (AGLSFGNEAS), Asn-110, and 137–138 (HR). The active site involves Glu-174. Arg-212 contacts substrate. The active site involves His-248. Substrate contacts are provided by Asp-250 and Asn-359. Cys-365 functions as the Nucleophile in the catalytic mechanism.

Belongs to the succinylarginine dihydrolase family. In terms of assembly, homodimer.

The catalysed reaction is N(2)-succinyl-L-arginine + 2 H2O + 2 H(+) = N(2)-succinyl-L-ornithine + 2 NH4(+) + CO2. Its pathway is amino-acid degradation; L-arginine degradation via AST pathway; L-glutamate and succinate from L-arginine: step 2/5. Catalyzes the hydrolysis of N(2)-succinylarginine into N(2)-succinylornithine, ammonia and CO(2). In Escherichia coli (strain ATCC 8739 / DSM 1576 / NBRC 3972 / NCIMB 8545 / WDCM 00012 / Crooks), this protein is N-succinylarginine dihydrolase.